An 85-amino-acid chain; its full sequence is Large ribosomal subunit protein bL27 (85 aa).

A disordered region spans residues 1 to 21 (MAHKKAGGSTRNGRDSESKRL).

It belongs to the bacterial ribosomal protein bL27 family.

This is Large ribosomal subunit protein bL27 from Pseudomonas putida (strain W619).